The primary structure comprises 427 residues: Peptidase B (427 aa).

Mn(2+) is bound by residues Lys-195 and Asp-200. Residue Lys-207 is part of the active site. 3 residues coordinate Mn(2+): Asp-218, Asp-277, and Glu-279. Arg-281 is an active-site residue.

It belongs to the peptidase M17 family. In terms of assembly, homohexamer. It depends on Mn(2+) as a cofactor.

The protein localises to the cytoplasm. It catalyses the reaction Release of an N-terminal amino acid, Xaa, from a peptide or arylamide. Xaa is preferably Glu or Asp but may be other amino acids, including Leu, Met, His, Cys and Gln.. In terms of biological role, probably plays an important role in intracellular peptide degradation. The polypeptide is Peptidase B (Escherichia coli O7:K1 (strain IAI39 / ExPEC)).